A 327-amino-acid chain; its full sequence is Phenylalanine--tRNA ligase alpha subunit (327 aa).

Glutamate 252 contributes to the Mg(2+) binding site.

This sequence belongs to the class-II aminoacyl-tRNA synthetase family. Phe-tRNA synthetase alpha subunit type 1 subfamily. Tetramer of two alpha and two beta subunits. It depends on Mg(2+) as a cofactor.

The protein localises to the cytoplasm. It carries out the reaction tRNA(Phe) + L-phenylalanine + ATP = L-phenylalanyl-tRNA(Phe) + AMP + diphosphate + H(+). This Salmonella choleraesuis (strain SC-B67) protein is Phenylalanine--tRNA ligase alpha subunit.